Reading from the N-terminus, the 186-residue chain is UPF0301 protein PM1869 (186 aa).

The protein belongs to the UPF0301 (AlgH) family.

This chain is UPF0301 protein PM1869, found in Pasteurella multocida (strain Pm70).